We begin with the raw amino-acid sequence, 257 residues long: Small ribosomal subunit protein eS1 (257 aa).

The interval 237-257 (GADGEKVDRPDDYEPPVQQEV) is disordered. Basic and acidic residues predominate over residues 239-248 (DGEKVDRPDD).

The protein belongs to the eukaryotic ribosomal protein eS1 family. As to quaternary structure, component of the small ribosomal subunit. Mature ribosomes consist of a small (40S) and a large (60S) subunit. The 40S subunit contains about 33 different proteins and 1 molecule of RNA (18S). The 60S subunit contains about 49 different proteins and 3 molecules of RNA (28S, 5.8S and 5S).

It is found in the cytoplasm. The sequence is that of Small ribosomal subunit protein eS1 from Caenorhabditis elegans.